Reading from the N-terminus, the 388-residue chain is Staphopain A (388 aa).

A signal peptide spans 1–25; sequence MKRNFPKLIALSLILSLSVTPIANA. Residues 26–214 constitute a propeptide that is removed on maturation; that stretch reads ESNSNIKAKD…TSQFKSNNYT (189 aa). Residues Cys-238, His-334, and Asn-355 contribute to the active site.

Belongs to the peptidase C47 family. In terms of assembly, in the cytoplasm, prematurely activated/folded ScpA forms a stable non-covalent complex with ScpB. In terms of processing, cleavage leads to the activation of ScpA probably by an auto-catalytic manner.

It localises to the secreted. It catalyses the reaction Broad endopeptidase action on proteins including elastin, but rather limited hydrolysis of small-molecule substrates. Assays are conveniently made with hemoglobin, casein or Z-Phe-Arg-NHMec as substrate.. With respect to regulation, prematurely activated/folded staphopain A is inhibited by staphostatin A (ScpB), which is probably required to protect staphylococcal cytoplasmic proteins from degradation by ScpA. Cysteine protease that plays an important role in the inhibition of host innate immune response. Cleaves host elastins found in connective tissues, pulmonary surfactant protein A in the lungs, and the chemokine receptor CXCR2 on leukocytes. Proteolytic cleavage of surfactant protein A impairs bacterial phagocytosis by neutrophils while CXCR2 degradation blocks neutrophil activation and chemotaxis. Additionally, promotes vascular leakage by activating the plasma kallikerin/kinin system, resulting in hypotension. This Staphylococcus aureus (strain MSSA476) protein is Staphopain A (sspP).